Reading from the N-terminus, the 940-residue chain is Mitogen-activated protein kinase kinase kinase 10 (940 aa).

Residues 16–81 form the SH3 domain; that stretch reads PAGPVWTAVF…PSNYVAPAAP (66 aa). The Protein kinase domain maps to 98-360; that stretch reads LQLEEIIGVG…GSILKQLEVI (263 aa). Residues 104 to 112 and Lys-125 each bind ATP; that span reads IGVGGFGKV. Residue Asp-222 is the Proton acceptor of the active site. Thr-258 bears the Phosphothreonine; by autocatalysis mark. Ser-262 bears the Phosphoserine; by autocatalysis and MAP4K1 mark. 2 leucine-zipper regions span residues 384-405 and 419-440; these read IQHM…EEEL and LRRR…ELHL. Disordered stretches follow at residues 490 to 599, 687 to 734, and 749 to 917; these read PTLD…MAPG, RAGD…GLAP, and STRS…QPTL. Ser-498, Ser-502, and Ser-506 each carry phosphoserine. Residues 501 to 511 show a composition bias toward low complexity; the sequence is ASPPASPSIIP. Thr-552 carries the phosphothreonine modification. 2 stretches are compositionally biased toward basic and acidic residues: residues 560-572 and 687-698; these read QKER…RLKA and RAGDGEEQRRWL. Over residues 765-775 the composition is skewed to pro residues; it reads APSPPPSPLAP. Residues 822-840 show a composition bias toward basic and acidic residues; that stretch reads LRQREPLELTNHGPRDPLD. An Omega-N-methylarginine modification is found at Arg-843. The span at 899 to 913 shows a compositional bias: pro residues; sequence PSRPDTPESPGPPSV.

Belongs to the protein kinase superfamily. STE Ser/Thr protein kinase family. MAP kinase kinase kinase subfamily. In terms of assembly, homodimer. Interacts with SH3RF2. Mg(2+) serves as cofactor. Post-translationally, autophosphorylation on serine and threonine residues within the activation loop plays a role in enzyme activation.

It catalyses the reaction L-seryl-[protein] + ATP = O-phospho-L-seryl-[protein] + ADP + H(+). The enzyme catalyses L-threonyl-[protein] + ATP = O-phospho-L-threonyl-[protein] + ADP + H(+). Its activity is regulated as follows. Homodimerization via the leucine zipper domains is required for autophosphorylation and subsequent activation. Activates the JUN N-terminal pathway. The protein is Mitogen-activated protein kinase kinase kinase 10 (Map3k10) of Mus musculus (Mouse).